A 114-amino-acid chain; its full sequence is MHEMSLAEGIRGIVEDVARENGATRVARVVLEIGELASVEVEALRFCLDVVLKDSVADGAAVDIEAVPGSGWCMQCATVVPIAQRYDACPQCGGYQVQPTGGTEMRVKELALGD.

Residue His-2 participates in Ni(2+) binding. Zn(2+) is bound by residues Cys-73, Cys-76, Cys-89, and Cys-92.

The protein belongs to the HypA/HybF family.

In terms of biological role, involved in the maturation of [NiFe] hydrogenases. Required for nickel insertion into the metal center of the hydrogenase. The polypeptide is Hydrogenase maturation factor HypA (Azoarcus sp. (strain BH72)).